Reading from the N-terminus, the 524-residue chain is Nucleobase-ascorbate transporter 2 (524 aa).

12 consecutive transmembrane segments (helical) span residues 41 to 61 (YILA…MMGG), 69 to 89 (VVQT…LFGT), 91 to 111 (LPTV…IIHD), 133 to 153 (GAII…MWAI), 155 to 175 (SRFF…FGLF), 179 to 199 (FPVV…FVIF), 217 to 237 (FALI…TASG), 282 to 302 (AFAM…AFKA), 359 to 379 (RVIQ…KFGA), 380 to 400 (LFAS…FGLV), 419 to 439 (LFIV…FRDF), and 457 to 477 (DFLN…AVFL).

This sequence belongs to the nucleobase:cation symporter-2 (NCS2) (TC 2.A.40) family. As to expression, expressed in cotyledons 10 days after imbibition (DAI). Expressed in the minor and major veins of cotyledons and leaves, in the shoot apex and pedicels. Expressed in the root meristems, root tips and lateral root primordia.

It localises to the membrane. This chain is Nucleobase-ascorbate transporter 2 (NAT2), found in Arabidopsis thaliana (Mouse-ear cress).